We begin with the raw amino-acid sequence, 388 residues long: Chorismate synthase (388 aa).

2 residues coordinate NADP(+): Arg-39 and Arg-45. Residues 132-134 (RSS), 251-252 (NA), Gly-296, 311-315 (KPIPT), and Arg-337 each bind FMN.

It belongs to the chorismate synthase family. Homotetramer. It depends on FMNH2 as a cofactor.

The catalysed reaction is 5-O-(1-carboxyvinyl)-3-phosphoshikimate = chorismate + phosphate. It functions in the pathway metabolic intermediate biosynthesis; chorismate biosynthesis; chorismate from D-erythrose 4-phosphate and phosphoenolpyruvate: step 7/7. Catalyzes the anti-1,4-elimination of the C-3 phosphate and the C-6 proR hydrogen from 5-enolpyruvylshikimate-3-phosphate (EPSP) to yield chorismate, which is the branch point compound that serves as the starting substrate for the three terminal pathways of aromatic amino acid biosynthesis. This reaction introduces a second double bond into the aromatic ring system. This Staphylococcus aureus (strain MRSA252) protein is Chorismate synthase.